Consider the following 305-residue polypeptide: tRNA pseudouridine synthase B (305 aa).

Asp-41 (nucleophile) is an active-site residue.

Belongs to the pseudouridine synthase TruB family. Type 1 subfamily.

The catalysed reaction is uridine(55) in tRNA = pseudouridine(55) in tRNA. Functionally, responsible for synthesis of pseudouridine from uracil-55 in the psi GC loop of transfer RNAs. This chain is tRNA pseudouridine synthase B, found in Prochlorococcus marinus (strain MIT 9515).